A 475-amino-acid polypeptide reads, in one-letter code: Ribulose bisphosphate carboxylase large chain (475 aa).

Positions 1-2 (MS) are excised as a propeptide. At Pro3 the chain carries N-acetylproline. Lys14 is subject to N6,N6,N6-trimethyllysine. The substrate site is built by Asn123 and Thr173. The active-site Proton acceptor is the Lys175. Lys177 lines the substrate pocket. Lys201, Asp203, and Glu204 together coordinate Mg(2+). The residue at position 201 (Lys201) is an N6-carboxylysine. Catalysis depends on His294, which acts as the Proton acceptor. The substrate site is built by Arg295, His327, and Ser379.

The protein belongs to the RuBisCO large chain family. Type I subfamily. Heterohexadecamer of 8 large chains and 8 small chains; disulfide-linked. The disulfide link is formed within the large subunit homodimers. The cofactor is Mg(2+). The disulfide bond which can form in the large chain dimeric partners within the hexadecamer appears to be associated with oxidative stress and protein turnover.

It is found in the plastid. The protein resides in the chloroplast. The catalysed reaction is 2 (2R)-3-phosphoglycerate + 2 H(+) = D-ribulose 1,5-bisphosphate + CO2 + H2O. It carries out the reaction D-ribulose 1,5-bisphosphate + O2 = 2-phosphoglycolate + (2R)-3-phosphoglycerate + 2 H(+). RuBisCO catalyzes two reactions: the carboxylation of D-ribulose 1,5-bisphosphate, the primary event in carbon dioxide fixation, as well as the oxidative fragmentation of the pentose substrate in the photorespiration process. Both reactions occur simultaneously and in competition at the same active site. This Magnolia acuminata (Cucumber tree) protein is Ribulose bisphosphate carboxylase large chain.